The following is a 342-amino-acid chain: Isopentenyl-diphosphate delta-isomerase (342 aa).

11–12 provides a ligand contact to substrate; that stretch reads RK. FMN contacts are provided by residues Ser-68, 69-71, Ser-99, and Asn-127; that span reads SMT. Residue 99 to 101 coordinates substrate; sequence SMR. Residue Gln-162 coordinates substrate. Glu-163 contacts Mg(2+). FMN is bound by residues Lys-194, Thr-224, 274–276, and 295–296; these read GLK and AG.

Belongs to the IPP isomerase type 2 family. Homooctamer. Dimer of tetramers. FMN serves as cofactor. Requires NADPH as cofactor. It depends on Mg(2+) as a cofactor.

It localises to the cytoplasm. It carries out the reaction isopentenyl diphosphate = dimethylallyl diphosphate. Its function is as follows. Involved in the biosynthesis of isoprenoids. Catalyzes the 1,3-allylic rearrangement of the homoallylic substrate isopentenyl (IPP) to its allylic isomer, dimethylallyl diphosphate (DMAPP). The chain is Isopentenyl-diphosphate delta-isomerase from Rickettsia canadensis (strain McKiel).